The following is a 149-amino-acid chain: Calmodulin (149 aa).

Position 2 is an N-acetylalanine (Ala2). 4 EF-hand domains span residues Glu8 to Asn43, Pro44 to Asp79, Asp81 to Lys116, and Leu117 to Lys149. Positions 21, 23, 25, 27, 32, 57, 59, 61, 63, 68, 94, 96, 98, and 105 each coordinate Ca(2+). At Lys116 the chain carries N6,N6,N6-trimethyllysine. The Ca(2+) site is built by Asp130, Asp132, Asp134, Gln136, and Glu141.

It belongs to the calmodulin family.

Functionally, calmodulin mediates the control of a large number of enzymes, ion channels and other proteins by Ca(2+). Among the enzymes to be stimulated by the calmodulin-Ca(2+) complex are a number of protein kinases and phosphatases. The chain is Calmodulin from Renilla reniformis (Sea pansy).